Here is a 192-residue protein sequence, read N- to C-terminus: Imidazole glycerol phosphate synthase subunit HisH (192 aa).

Positions 1 to 192 (MIVIVDYGLG…QAIQGGFIND (192 aa)) constitute a Glutamine amidotransferase type-1 domain. The active-site Nucleophile is the C77. Residues H169 and E171 contribute to the active site.

In terms of assembly, heterodimer of HisH and HisF.

It localises to the cytoplasm. The catalysed reaction is 5-[(5-phospho-1-deoxy-D-ribulos-1-ylimino)methylamino]-1-(5-phospho-beta-D-ribosyl)imidazole-4-carboxamide + L-glutamine = D-erythro-1-(imidazol-4-yl)glycerol 3-phosphate + 5-amino-1-(5-phospho-beta-D-ribosyl)imidazole-4-carboxamide + L-glutamate + H(+). The enzyme catalyses L-glutamine + H2O = L-glutamate + NH4(+). Its pathway is amino-acid biosynthesis; L-histidine biosynthesis; L-histidine from 5-phospho-alpha-D-ribose 1-diphosphate: step 5/9. Its function is as follows. IGPS catalyzes the conversion of PRFAR and glutamine to IGP, AICAR and glutamate. The HisH subunit catalyzes the hydrolysis of glutamine to glutamate and ammonia as part of the synthesis of IGP and AICAR. The resulting ammonia molecule is channeled to the active site of HisF. The protein is Imidazole glycerol phosphate synthase subunit HisH of Staphylococcus aureus (strain bovine RF122 / ET3-1).